A 699-amino-acid chain; its full sequence is Elongation factor G (699 aa).

The tr-type G domain maps to 10–292 (NRTRNIGIMA…AVIDYLPSPT (283 aa)). GTP is bound by residues 19–26 (AHIDAGKT), 90–94 (DTPGH), and 144–147 (NKMD). The tract at residues 292–312 (TDVPAIRGEEDDGSEGSRSAS) is disordered.

The protein belongs to the TRAFAC class translation factor GTPase superfamily. Classic translation factor GTPase family. EF-G/EF-2 subfamily.

The protein resides in the cytoplasm. Functionally, catalyzes the GTP-dependent ribosomal translocation step during translation elongation. During this step, the ribosome changes from the pre-translocational (PRE) to the post-translocational (POST) state as the newly formed A-site-bound peptidyl-tRNA and P-site-bound deacylated tRNA move to the P and E sites, respectively. Catalyzes the coordinated movement of the two tRNA molecules, the mRNA and conformational changes in the ribosome. This is Elongation factor G from Coxiella burnetii (strain RSA 331 / Henzerling II).